The sequence spans 166 residues: Large ribosomal subunit protein uL10 (166 aa).

The protein belongs to the universal ribosomal protein uL10 family. In terms of assembly, part of the ribosomal stalk of the 50S ribosomal subunit. The N-terminus interacts with L11 and the large rRNA to form the base of the stalk. The C-terminus forms an elongated spine to which L12 dimers bind in a sequential fashion forming a multimeric L10(L12)X complex.

Forms part of the ribosomal stalk, playing a central role in the interaction of the ribosome with GTP-bound translation factors. The sequence is that of Large ribosomal subunit protein uL10 from Tropheryma whipplei (strain TW08/27) (Whipple's bacillus).